A 121-amino-acid polypeptide reads, in one-letter code: Fluoride-specific ion channel FluC 1 (121 aa).

The next 4 membrane-spanning stretches (helical) occupy residues 3–23 (YVYIFIGGALGALLRYLISFL), 35–55 (IANLTGAFVMGLLTALTIAFF), 64–84 (AITTGFLGALTTFSTFQLELI), and 92–112 (FITLLLYAVTSYVFGILLCYV). Residues Gly71 and Thr74 each coordinate Na(+).

It belongs to the fluoride channel Fluc/FEX (TC 1.A.43) family.

It is found in the cell membrane. It catalyses the reaction fluoride(in) = fluoride(out). Its activity is regulated as follows. Na(+) is not transported, but it plays an essential structural role and its presence is essential for fluoride channel function. Fluoride-specific ion channel. Important for reducing fluoride concentration in the cell, thus reducing its toxicity. In Staphylococcus aureus (strain NCTC 8325 / PS 47), this protein is Fluoride-specific ion channel FluC 1.